The sequence spans 338 residues: Phenylalanine--tRNA ligase alpha subunit (338 aa).

Glu253 provides a ligand contact to Mg(2+).

The protein belongs to the class-II aminoacyl-tRNA synthetase family. Phe-tRNA synthetase alpha subunit type 1 subfamily. Tetramer of two alpha and two beta subunits. Requires Mg(2+) as cofactor.

The protein localises to the cytoplasm. The enzyme catalyses tRNA(Phe) + L-phenylalanine + ATP = L-phenylalanyl-tRNA(Phe) + AMP + diphosphate + H(+). The protein is Phenylalanine--tRNA ligase alpha subunit of Geotalea uraniireducens (strain Rf4) (Geobacter uraniireducens).